Here is a 440-residue protein sequence, read N- to C-terminus: Acetylornithine deacetylase (440 aa).

H101 serves as a coordination point for Zn(2+). D103 is an active-site residue. Residue D133 coordinates Zn(2+). Catalysis depends on E167, which acts as the Proton acceptor. The Zn(2+) site is built by E168 and H412.

The protein belongs to the peptidase M20A family. ArgE subfamily. As to quaternary structure, homodimer. It depends on Zn(2+) as a cofactor. Co(2+) is required as a cofactor.

It carries out the reaction N(2)-acetyl-L-ornithine + H2O = L-ornithine + acetate. It participates in amino-acid biosynthesis; L-arginine biosynthesis; L-ornithine from N(2)-acetyl-L-ornithine (linear): step 1/1. This chain is Acetylornithine deacetylase, found in Arabidopsis thaliana (Mouse-ear cress).